The sequence spans 500 residues: Protein SLENDER RICE1-LIKE 2 (500 aa).

One can recognise a GRAS domain in the interval 68–454; that stretch reads KELEKMALRS…QRLYSASAWR (387 aa). Residues 75-135 form a leucine repeat I (LRI) region; it reads LRSVNLMVTC…DALAERLFPA (61 aa). The interval 154–219 is VHIID; it reads FRGFYEAGPY…GGPPFLRITG (66 aa). The VHIID motif lies at 185–189; the sequence is VHVID. Residues 233 to 265 are leucine repeat II (LRII); the sequence is DVGLRLAEFARSCSVPFAFRGIAADQLDGLRPW. Residues 275–376 are PFYRE; that stretch reads VAINSVLQLH…EAYLQGEIAD (102 aa). The LXXLL motif signature appears at 283–287; the sequence is LHRLL. An SAW region spans residues 379 to 454; that stretch reads SREGSSRVER…QRLYSASAWR (76 aa). Residues 466–500 are disordered; sequence SGAADAMEESQNSNTNGGGGGSSGGGHGALNQIMQ. Gly residues predominate over residues 481–493; it reads NGGGGGSSGGGHG.

It belongs to the GRAS family. As to expression, expressed at low levels in leaf blades, leaf sheaths, rachis and flowers. Expressed in the embryo of immature seeds.

The protein localises to the nucleus. Probable transcriptional regulator that acts as a repressor of the gibberellin (GA) signaling pathway. Its repressive activity is weaker than that of SLR1. Its overexpression prevents the GA signaling pathway and induces a dwarf phenotype in Arabidopsis thaliana plants. This Oryza sativa subsp. japonica (Rice) protein is Protein SLENDER RICE1-LIKE 2.